The primary structure comprises 581 residues: Mitosis inhibitor protein kinase mik1 (581 aa).

2 disordered regions span residues 43–71 and 148–178; these read GHEE…HTPM and NLTN…PLSP. Residues 59 to 71 show a composition bias toward polar residues; it reads KPSNTKRSPHTPM. Positions 160–169 are enriched in basic residues; sequence PCKKGTKIKL. Residues 289–561 enclose the Protein kinase domain; the sequence is FQQVKPIHES…LLAMPEMIFI (273 aa). ATP-binding positions include 295–303 and K320; that span reads IHESDFSFV. Catalysis depends on D417, which acts as the Proton acceptor. Mg(2+) contacts are provided by N422 and D435.

Belongs to the protein kinase superfamily. Ser/Thr protein kinase family. WEE1 subfamily.

The enzyme catalyses L-seryl-[protein] + ATP = O-phospho-L-seryl-[protein] + ADP + H(+). The catalysed reaction is L-threonyl-[protein] + ATP = O-phospho-L-threonyl-[protein] + ADP + H(+). Functionally, protein kinase that acts both on serines and on tyrosines. It acts as a negative regulator of entry into mitosis (G2 to M transition). Phosphorylates and inhibits cdc2. The polypeptide is Mitosis inhibitor protein kinase mik1 (mik1) (Schizosaccharomyces pombe (strain 972 / ATCC 24843) (Fission yeast)).